The chain runs to 109 residues: Cell division suppressor protein YneA (109 aa).

A LysM domain is found at 40–94; that stretch reads STVTITKGDTLWELSNKYHNHHHLTTNEFVKWVEDVNDLNSDTAQSLSPGDKLYI.

This sequence belongs to the YneA family.

Its subcellular location is the cytoplasm. In terms of biological role, inhibits cell division during the SOS response. Affects a later stage of the cell division protein assembly, after the assembly of the Z ring, by probably suppressing recruitment of FtsL and/or DivIC to the division machinery. In Priestia megaterium (strain DSM 319 / IMG 1521) (Bacillus megaterium), this protein is Cell division suppressor protein YneA.